A 376-amino-acid polypeptide reads, in one-letter code: N-acetyldiaminopimelate deacetylase (376 aa).

Asp69 is a catalytic residue. The active-site Proton acceptor is Glu128.

This sequence belongs to the peptidase M20A family. N-acetyldiaminopimelate deacetylase subfamily.

It carries out the reaction N-acetyl-(2S,6S)-2,6-diaminopimelate + H2O = (2S,6S)-2,6-diaminopimelate + acetate. The protein operates within amino-acid biosynthesis; L-lysine biosynthesis via DAP pathway; LL-2,6-diaminopimelate from (S)-tetrahydrodipicolinate (acetylase route): step 3/3. In terms of biological role, catalyzes the conversion of N-acetyl-diaminopimelate to diaminopimelate and acetate. This Bacillus mycoides (strain KBAB4) (Bacillus weihenstephanensis) protein is N-acetyldiaminopimelate deacetylase.